A 567-amino-acid polypeptide reads, in one-letter code: Dihydroxy-acid dehydratase 2 (567 aa).

Cys56 lines the [2Fe-2S] cluster pocket. Residue Asp88 coordinates Mg(2+). [2Fe-2S] cluster is bound at residue Cys129. Mg(2+) is bound by residues Asp130 and Lys131. N6-carboxylysine is present on Lys131. A [2Fe-2S] cluster-binding site is contributed by Cys206. Glu457 contributes to the Mg(2+) binding site. Ser483 functions as the Proton acceptor in the catalytic mechanism.

It belongs to the IlvD/Edd family. In terms of assembly, homodimer. It depends on [2Fe-2S] cluster as a cofactor. Mg(2+) is required as a cofactor.

It catalyses the reaction (2R)-2,3-dihydroxy-3-methylbutanoate = 3-methyl-2-oxobutanoate + H2O. The enzyme catalyses (2R,3R)-2,3-dihydroxy-3-methylpentanoate = (S)-3-methyl-2-oxopentanoate + H2O. It functions in the pathway amino-acid biosynthesis; L-isoleucine biosynthesis; L-isoleucine from 2-oxobutanoate: step 3/4. It participates in amino-acid biosynthesis; L-valine biosynthesis; L-valine from pyruvate: step 3/4. Its function is as follows. Functions in the biosynthesis of branched-chain amino acids. Catalyzes the dehydration of (2R,3R)-2,3-dihydroxy-3-methylpentanoate (2,3-dihydroxy-3-methylvalerate) into 2-oxo-3-methylpentanoate (2-oxo-3-methylvalerate) and of (2R)-2,3-dihydroxy-3-methylbutanoate (2,3-dihydroxyisovalerate) into 2-oxo-3-methylbutanoate (2-oxoisovalerate), the penultimate precursor to L-isoleucine and L-valine, respectively. The sequence is that of Dihydroxy-acid dehydratase 2 from Corynebacterium efficiens (strain DSM 44549 / YS-314 / AJ 12310 / JCM 11189 / NBRC 100395).